We begin with the raw amino-acid sequence, 250 residues long: Cholesterol ring-cleaving hydrolase IpdB subunit (250 aa).

The protein belongs to the 3-oxoacid CoA-transferase subunit B family. In terms of assembly, heterotetramer composed of 2 IpdA subunits and 2 IpdB subunits.

It carries out the reaction (3E)-2-(2-carboxylatoethyl)-3-methyl-6-oxocyclohex-1-ene-1-carboxyl-CoA + H2O = 6-methyl-3,7-dioxodecanedioyl-CoA. The protein operates within steroid metabolism; cholesterol degradation. Functionally, involved in the final steps of cholesterol and steroid degradation. Opens the last steroid ring of cholesterol by catalyzing the hydrolysis of (3E)-2-(2-carboxylatoethyl)-3-methyl-6-oxocyclohex-1-ene-1-carboxyl-CoA (COCHEA-CoA) to 6-methyl-3,7-dioxodecanedioyl-CoA (MeDODA-CoA). In Mycobacterium bovis (strain ATCC BAA-935 / AF2122/97), this protein is Cholesterol ring-cleaving hydrolase IpdB subunit.